We begin with the raw amino-acid sequence, 267 residues long: Phosphatidylserine decarboxylase proenzyme (267 aa).

Catalysis depends on charge relay system; for autoendoproteolytic cleavage activity residues aspartate 78, histidine 132, and serine 236. Serine 236 (schiff-base intermediate with substrate; via pyruvic acid; for decarboxylase activity) is an active-site residue. The residue at position 236 (serine 236) is a Pyruvic acid (Ser); by autocatalysis.

Belongs to the phosphatidylserine decarboxylase family. PSD-B subfamily. Prokaryotic type I sub-subfamily. Heterodimer of a large membrane-associated beta subunit and a small pyruvoyl-containing alpha subunit. It depends on pyruvate as a cofactor. Is synthesized initially as an inactive proenzyme. Formation of the active enzyme involves a self-maturation process in which the active site pyruvoyl group is generated from an internal serine residue via an autocatalytic post-translational modification. Two non-identical subunits are generated from the proenzyme in this reaction, and the pyruvate is formed at the N-terminus of the alpha chain, which is derived from the carboxyl end of the proenzyme. The autoendoproteolytic cleavage occurs by a canonical serine protease mechanism, in which the side chain hydroxyl group of the serine supplies its oxygen atom to form the C-terminus of the beta chain, while the remainder of the serine residue undergoes an oxidative deamination to produce ammonia and the pyruvoyl prosthetic group on the alpha chain. During this reaction, the Ser that is part of the protease active site of the proenzyme becomes the pyruvoyl prosthetic group, which constitutes an essential element of the active site of the mature decarboxylase.

The protein localises to the cell membrane. It carries out the reaction a 1,2-diacyl-sn-glycero-3-phospho-L-serine + H(+) = a 1,2-diacyl-sn-glycero-3-phosphoethanolamine + CO2. It functions in the pathway phospholipid metabolism; phosphatidylethanolamine biosynthesis; phosphatidylethanolamine from CDP-diacylglycerol: step 2/2. Functionally, catalyzes the formation of phosphatidylethanolamine (PtdEtn) from phosphatidylserine (PtdSer). The chain is Phosphatidylserine decarboxylase proenzyme from Helicobacter pylori (strain ATCC 700392 / 26695) (Campylobacter pylori).